Here is a 524-residue protein sequence, read N- to C-terminus: Ribonuclease Y (524 aa).

Residues 3–23 (IVINLFLIIFASVVFFAAGFF) traverse the membrane as a helical segment. The KH domain maps to 214–274 (ALSVVHIQSD…LRREHAKLTL (61 aa)). An HD domain is found at 340–432 (LLQHSREVAM…VDAANVISLA (93 aa)).

This sequence belongs to the RNase Y family.

The protein localises to the cell membrane. Endoribonuclease that initiates mRNA decay. This is Ribonuclease Y from Chlorobium luteolum (strain DSM 273 / BCRC 81028 / 2530) (Pelodictyon luteolum).